A 162-amino-acid polypeptide reads, in one-letter code: Caveolin-2 (162 aa).

Residues 1–86 are Cytoplasmic-facing; it reads MGLETEKADV…FEISKYVMYK (86 aa). At Tyr19 the chain carries Phosphotyrosine; by SRC. Residue Ser20 is modified to Phosphoserine. A Phosphotyrosine; by SRC modification is found at Tyr27. Residue Ser36 is modified to Phosphoserine. The helical intramembrane region spans 87–107; it reads FLTVFLAIPLAFAAGILFATL. At 108-162 the chain is on the cytoplasmic side; that stretch reads SCLHIWIIMPFVKTCLMVLPSVQTIWKSVTDVIIAPLCTSVGRSLSSISLQLSHD.

It belongs to the caveolin family. Monomer or homodimer. Interacts with CAV1; the interaction forms a stable heterooligomeric complex that is required for targeting to lipid rafts and for caveolae formation. Tyrosine phosphorylated forms do not form heterooligomers with the Tyr-19-phosphorylated form existing as a monomer or dimer, and the Tyr-27-form as a monomer only. Interacts (tyrosine phosphorylated form) with the SH2 domain-containing proteins, RASA1, NCK1 and SRC. Interacts (tyrosine phosphorylated form) with INSR, the interaction (Tyr-27-phosphorylated form) is increased on insulin stimulation. Interacts (Tyr-19 phosphorylated form) with MAPK1 (phosphorylated form); the interaction, promoted by insulin, leads to nuclear location and MAPK1 activation. Interacts with STAT3; the interaction is increased on insulin-induced tyrosine phosphorylation leading to STAT activation. Post-translationally, phosphorylated on serine and tyrosine residues. Phosphorylation on Ser-36 appears to modulate mitosis in endothelial cells. Phosphorylation on both Tyr-19 and Tyr-27 is required for insulin-induced 'Ser-727' phosphorylation of STAT3 and its activation. Phosphorylation on Tyr-19 is required for insulin-induced phosphorylation of MAPK1 and DNA binding of STAT3. Tyrosine phosphorylation is induced by both EGF and insulin.

The protein resides in the nucleus. It localises to the cytoplasm. Its subcellular location is the golgi apparatus membrane. The protein localises to the cell membrane. It is found in the membrane. The protein resides in the caveola. Its function is as follows. May act as a scaffolding protein within caveolar membranes. Interacts directly with G-protein alpha subunits and can functionally regulate their activity. Acts as an accessory protein in conjunction with CAV1 in targeting to lipid rafts and driving caveolae formation. The Ser-36 phosphorylated form has a role in modulating mitosis in endothelial cells. Positive regulator of cellular mitogenesis of the MAPK signaling pathway. Required for the insulin-stimulated nuclear translocation and activation of MAPK1 and STAT3, and the subsequent regulation of cell cycle progression. The polypeptide is Caveolin-2 (CAV2) (Eulemur macaco macaco (Black lemur)).